Here is a 445-residue protein sequence, read N- to C-terminus: Methionine aminopeptidase 2 (445 aa).

A disordered region spans residues 1 to 80; the sequence is MAAQVASGVG…TSKVQTEPPR (80 aa). The segment covering 57–71 has biased composition (basic residues); that stretch reads AKKKKKKTKKKKKGT. Residue His195 coordinates substrate. Asp215, Asp226, and His295 together coordinate a divalent metal cation. His303 lines the substrate pocket. Positions 331 and 426 each coordinate a divalent metal cation.

It belongs to the peptidase M24A family. Methionine aminopeptidase eukaryotic type 2 subfamily. Co(2+) serves as cofactor. The cofactor is Zn(2+). It depends on Mn(2+) as a cofactor. Fe(2+) is required as a cofactor.

It is found in the cytoplasm. It catalyses the reaction Release of N-terminal amino acids, preferentially methionine, from peptides and arylamides.. Cotranslationally removes the N-terminal methionine from nascent proteins. The N-terminal methionine is often cleaved when the second residue in the primary sequence is small and uncharged (Met-Ala-, Cys, Gly, Pro, Ser, Thr, or Val). In Paracoccidioides brasiliensis (strain Pb03), this protein is Methionine aminopeptidase 2.